The following is a 306-amino-acid chain: Ornithine carbamoyltransferase (306 aa).

Carbamoyl phosphate is bound by residues 46-49 (STRT), glutamine 73, arginine 97, and 124-127 (HPTQ). L-ornithine is bound by residues asparagine 156, aspartate 220, and 224-225 (SM). Carbamoyl phosphate-binding positions include 260–261 (CL) and arginine 288.

The protein belongs to the aspartate/ornithine carbamoyltransferase superfamily. OTCase family.

The protein localises to the cytoplasm. It catalyses the reaction carbamoyl phosphate + L-ornithine = L-citrulline + phosphate + H(+). The protein operates within amino-acid degradation; L-arginine degradation via ADI pathway; carbamoyl phosphate from L-arginine: step 2/2. In terms of biological role, reversibly catalyzes the transfer of the carbamoyl group from carbamoyl phosphate (CP) to the N(epsilon) atom of ornithine (ORN) to produce L-citrulline. This is Ornithine carbamoyltransferase from Campylobacter jejuni subsp. jejuni serotype O:6 (strain 81116 / NCTC 11828).